The sequence spans 281 residues: 3'-5' exonuclease Snipper (281 aa).

The segment at 19 to 52 (DGARPDPNNDPEESFNEDEVTEANSVPAKSKKSR) is disordered. Positions 27–39 (NDPEESFNEDEVT) are enriched in acidic residues. One can recognise an Exonuclease domain in the interval 64–262 (YVIAVDFEAT…MCKMVRDGAL (199 aa)). 2 residues coordinate Mg(2+): aspartate 69 and glutamate 71. Residue glutamate 71 is the Proton acceptor of the active site. Glutamate 71 and alanine 72 together coordinate AMP. Aspartate 183 contacts Mg(2+). Residue histidine 240 is the Proton acceptor of the active site. Histidine 240 contributes to the AMP binding site. Position 245 (aspartate 245) interacts with Mg(2+).

This sequence belongs to the ERI2 family. Requires Mg(2+) as cofactor.

The protein resides in the cytoplasm. It localises to the nucleus. Its subcellular location is the nucleolus. In terms of biological role, a broad-specificity exonuclease, capable of degrading both structure-specific DNA and RNA targets without sequence specificity in vitro. Requires two to five unpaired nucleotides in the 3' region for efficient binding and nuclease activity. Binds with higher affinity to RNA and DNA stem-loop substrates compared to single-stranded substrate. Binds to the 3'-end of histone mRNAs and degrades them, suggesting that it might play a role in histone mRNA decay after replication. Can readily cleave the histone stem-loop RNA beyond the -12 (UUU) position in the loop to produce -14 and then -16 oligonucleotide fragments for both the stem-loop and the reverse stem-loop. Cleaves both the single-stranded 3' flank as well as the double-stranded stem portion of histone stem-loop RNA. Might affect histone mRNA 3' processing thereby regulating histone protein expression. Has an important role in development and tissue formation. Might have a role in 5.8S rRNA precursor processing. This is 3'-5' exonuclease Snipper from Drosophila melanogaster (Fruit fly).